Consider the following 279-residue polypeptide: Thymidylate synthase (279 aa).

133-134 (RR) provides a ligand contact to dUMP. Cysteine 154 (nucleophile) is an active-site residue. DUMP-binding positions include 178 to 181 (RSND), asparagine 189, and 219 to 221 (HIY). Aspartate 181 provides a ligand contact to (6R)-5,10-methylene-5,6,7,8-tetrahydrofolate. Alanine 278 serves as a coordination point for (6R)-5,10-methylene-5,6,7,8-tetrahydrofolate.

It belongs to the thymidylate synthase family. Bacterial-type ThyA subfamily. In terms of assembly, homodimer.

The protein localises to the cytoplasm. It carries out the reaction dUMP + (6R)-5,10-methylene-5,6,7,8-tetrahydrofolate = 7,8-dihydrofolate + dTMP. It functions in the pathway pyrimidine metabolism; dTTP biosynthesis. Its function is as follows. Catalyzes the reductive methylation of 2'-deoxyuridine-5'-monophosphate (dUMP) to 2'-deoxythymidine-5'-monophosphate (dTMP) while utilizing 5,10-methylenetetrahydrofolate (mTHF) as the methyl donor and reductant in the reaction, yielding dihydrofolate (DHF) as a by-product. This enzymatic reaction provides an intracellular de novo source of dTMP, an essential precursor for DNA biosynthesis. This is Thymidylate synthase from Streptococcus suis (strain 05ZYH33).